We begin with the raw amino-acid sequence, 416 residues long: Imidazolonepropionase (416 aa).

Positions 82 and 84 each coordinate Fe(3+). Residues histidine 82 and histidine 84 each coordinate Zn(2+). Arginine 91, tyrosine 154, and histidine 187 together coordinate 4-imidazolone-5-propanoate. N-formimidoyl-L-glutamate is bound at residue tyrosine 154. Residue histidine 252 coordinates Fe(3+). Zn(2+) is bound at residue histidine 252. Position 255 (glutamate 255) interacts with 4-imidazolone-5-propanoate. Aspartate 326 is a Fe(3+) binding site. A Zn(2+)-binding site is contributed by aspartate 326. Asparagine 328 and glycine 330 together coordinate N-formimidoyl-L-glutamate. Residue serine 331 participates in 4-imidazolone-5-propanoate binding.

This sequence belongs to the metallo-dependent hydrolases superfamily. HutI family. Zn(2+) is required as a cofactor. The cofactor is Fe(3+).

It is found in the cytoplasm. It catalyses the reaction 4-imidazolone-5-propanoate + H2O = N-formimidoyl-L-glutamate. It functions in the pathway amino-acid degradation; L-histidine degradation into L-glutamate; N-formimidoyl-L-glutamate from L-histidine: step 3/3. In terms of biological role, catalyzes the hydrolytic cleavage of the carbon-nitrogen bond in imidazolone-5-propanoate to yield N-formimidoyl-L-glutamate. It is the third step in the universal histidine degradation pathway. This chain is Imidazolonepropionase, found in Parabacteroides distasonis (strain ATCC 8503 / DSM 20701 / CIP 104284 / JCM 5825 / NCTC 11152).